We begin with the raw amino-acid sequence, 79 residues long: Calcium/calmodulin-dependent protein kinase II inhibitor 2 (79 aa).

The tract at residues 43–69 (KRPPKLGQIGRAKRVVIEDDRIDEVLK) is inhibitory domain.

The protein belongs to the CAMK2N family.

It is found in the nucleus. It localises to the cytoplasm. The protein localises to the cytosol. Potent and specific cellular inhibitor of CaM-kinase II (CAMK2). Traps Ca(2+)/calmodulin on CAMK2. This is Calcium/calmodulin-dependent protein kinase II inhibitor 2 (camk2n2) from Xenopus laevis (African clawed frog).